We begin with the raw amino-acid sequence, 243 residues long: Toxin CcTX-1 (243 aa).

The span at 1–25 (SSPEKKNDMSKPGRMRFDNKKEPRS) shows a compositional bias: basic and acidic residues. Residues 1 to 48 (SSPEKKNDMSKPGRMRFDNKKEPRSSAKNSGNGYGCVDVNAGREPLTG) form a disordered region.

Post-translationally, contains disulfide bonds. In terms of tissue distribution, nematocytes.

The protein resides in the secreted. It is found in the nematocyst. The protein localises to the target cell membrane. Has potent hemolytic activity. Is lethal to crayfish. Causes cutaneous inflammation in humans. May act as a pore-forming toxin, disrupting normal transmembrane ion concentration gradients in susceptible cells. This is Toxin CcTX-1 from Cyanea capillata (Lion's mane jellyfish).